The chain runs to 216 residues: Probable transaldolase (216 aa).

K83 serves as the catalytic Schiff-base intermediate with substrate.

This sequence belongs to the transaldolase family. Type 3B subfamily.

The protein resides in the cytoplasm. It catalyses the reaction D-sedoheptulose 7-phosphate + D-glyceraldehyde 3-phosphate = D-erythrose 4-phosphate + beta-D-fructose 6-phosphate. It participates in carbohydrate degradation; pentose phosphate pathway; D-glyceraldehyde 3-phosphate and beta-D-fructose 6-phosphate from D-ribose 5-phosphate and D-xylulose 5-phosphate (non-oxidative stage): step 2/3. In terms of biological role, transaldolase is important for the balance of metabolites in the pentose-phosphate pathway. This is Probable transaldolase from Desulforamulus reducens (strain ATCC BAA-1160 / DSM 100696 / MI-1) (Desulfotomaculum reducens).